Reading from the N-terminus, the 278-residue chain is Probable esterase TOX9 (278 aa).

Residues S119, D222, and H250 each act as charge relay system in the active site.

It belongs to the LovG family.

Its pathway is mycotoxin biosynthesis. Probable esterase; part of the Tox1A locus, one of the 2 loci that mediate the biosynthesis of T-toxin, a family of linear polyketides 37 to 45 carbons in length, of which the major component is 41 carbons, and which leads to high virulence to maize. One of the PKSs (PKS1 or PKS2) could synthesize a precursor, used subsequently by the other PKS as starter unit, to add additional carbons. Variability in the length of the final carbon backbone C35-47 could be achieved by varying the number of condensation cycles, or use of different starter or extender units or might be due to decarboxylation of the penultimate product, catalyzed by DEC1. Additional proteins are required for the biosynthesis of T-toxin, including oxidoreductases RED1, RED2, RED3, LAM1 and OXI1, as well as esterase TOX9. The chain is Probable esterase TOX9 from Cochliobolus heterostrophus (strain C4 / ATCC 48331 / race T) (Southern corn leaf blight fungus).